The chain runs to 169 residues: UPF0303 protein BMEI0598 (169 aa).

Belongs to the UPF0303 family.

In Brucella melitensis biotype 1 (strain ATCC 23456 / CCUG 17765 / NCTC 10094 / 16M), this protein is UPF0303 protein BMEI0598.